The chain runs to 299 residues: Pyridoxal kinase PdxY (299 aa).

Ser-18 is a substrate binding site. Residues Asp-120 and Glu-157 each contribute to the ATP site. Position 235 (Asp-235) interacts with substrate.

This sequence belongs to the pyridoxine kinase family. PdxY subfamily. Homodimer. It depends on Mg(2+) as a cofactor.

The enzyme catalyses pyridoxal + ATP = pyridoxal 5'-phosphate + ADP + H(+). It functions in the pathway cofactor metabolism; pyridoxal 5'-phosphate salvage; pyridoxal 5'-phosphate from pyridoxal: step 1/1. Pyridoxal kinase involved in the salvage pathway of pyridoxal 5'-phosphate (PLP). Catalyzes the phosphorylation of pyridoxal to PLP. This chain is Pyridoxal kinase PdxY, found in Deinococcus geothermalis (strain DSM 11300 / CIP 105573 / AG-3a).